Here is a 195-residue protein sequence, read N- to C-terminus: Probable GTP-binding protein EngB (195 aa).

In terms of domain architecture, EngB-type G spans 22–195 (GRPEVALAGR…WAALLPFVAS (174 aa)). GTP is bound by residues 30-37 (GRSNVGKS), 57-61 (GKTQT), 75-78 (DVPG), 142-145 (TKAD), and 174-176 (FSA). Residues serine 37 and threonine 59 each coordinate Mg(2+).

The protein belongs to the TRAFAC class TrmE-Era-EngA-EngB-Septin-like GTPase superfamily. EngB GTPase family. The cofactor is Mg(2+).

In terms of biological role, necessary for normal cell division and for the maintenance of normal septation. This Geobacillus kaustophilus (strain HTA426) protein is Probable GTP-binding protein EngB.